Here is a 100-residue protein sequence, read N- to C-terminus: Urease subunit gamma (100 aa).

It belongs to the urease gamma subunit family. Heterotrimer of UreA (gamma), UreB (beta) and UreC (alpha) subunits. Three heterotrimers associate to form the active enzyme.

It is found in the cytoplasm. It carries out the reaction urea + 2 H2O + H(+) = hydrogencarbonate + 2 NH4(+). The protein operates within nitrogen metabolism; urea degradation; CO(2) and NH(3) from urea (urease route): step 1/1. In Haemophilus influenzae (strain ATCC 51907 / DSM 11121 / KW20 / Rd), this protein is Urease subunit gamma.